The sequence spans 102 residues: RNA-binding protein Hfq (102 aa).

The region spanning 9-68 is the Sm domain; it reads DPFLNALRRERVPVSIYLVNGIKLQGQIESFDQFVILLKNTVSQMVYKHAISTVVPSRPV. Positions 63–102 are disordered; that stretch reads VPSRPVSHHSNNAGGGSSNYHHGGSAQGSSAPQQDSDDAE. Residues 70-86 are compositionally biased toward low complexity; it reads HHSNNAGGGSSNYHHGG.

It belongs to the Hfq family. In terms of assembly, homohexamer.

Its function is as follows. RNA chaperone that binds small regulatory RNA (sRNAs) and mRNAs to facilitate mRNA translational regulation in response to envelope stress, environmental stress and changes in metabolite concentrations. Also binds with high specificity to tRNAs. The chain is RNA-binding protein Hfq from Klebsiella pneumoniae (strain 342).